The chain runs to 215 residues: Large ribosomal subunit protein uL4 (215 aa).

Residues 46 to 72 form a disordered region; that stretch reads TAKSKNRAEVSGGGRKPWAQKGGGRAR. A compositionally biased stretch (gly residues) spans 56–71; that stretch reads SGGGRKPWAQKGGGRA.

This sequence belongs to the universal ribosomal protein uL4 family. As to quaternary structure, part of the 50S ribosomal subunit.

Functionally, one of the primary rRNA binding proteins, this protein initially binds near the 5'-end of the 23S rRNA. It is important during the early stages of 50S assembly. It makes multiple contacts with different domains of the 23S rRNA in the assembled 50S subunit and ribosome. Its function is as follows. Forms part of the polypeptide exit tunnel. The chain is Large ribosomal subunit protein uL4 from Helicobacter pylori (strain ATCC 700392 / 26695) (Campylobacter pylori).